A 377-amino-acid chain; its full sequence is Gastricsin (377 aa).

The first 5 residues, 1–5, serve as a signal peptide directing secretion; that stretch reads QLLEA. 2 consecutive propeptides (activation peptide) follow at residues 6 to 31 and 32 to 48; these read AVVK…LGEF and LRTH…FGDL. The 313-residue stretch at 62–374 folds into the Peptidase A1 domain; it reads YFGEISIGTP…DLSNNRVGFA (313 aa). Asp-80 is a catalytic residue. Intrachain disulfides connect Cys-93–Cys-98 and Cys-256–Cys-260. The active site involves Asp-265. Cys-299 and Cys-332 form a disulfide bridge.

It belongs to the peptidase A1 family. Post-translationally, each pepsinogen is converted to corresponding pepsin at pH 2.0 in part as a result of the release of a 47 AA activation segment and in part as a result of stepwise proteolytic cleavage via an intermediate form(s).

It localises to the secreted. It carries out the reaction More restricted specificity than pepsin A, but shows preferential cleavage at Tyr-|-Xaa bonds. High activity on hemoglobin.. Its function is as follows. Hydrolyzes a variety of proteins. This Macaca fuscata fuscata (Japanese macaque) protein is Gastricsin (PGC).